Reading from the N-terminus, the 418-residue chain is Gamma-glutamyl phosphate reductase (418 aa).

It belongs to the gamma-glutamyl phosphate reductase family.

Its subcellular location is the cytoplasm. The enzyme catalyses L-glutamate 5-semialdehyde + phosphate + NADP(+) = L-glutamyl 5-phosphate + NADPH + H(+). It functions in the pathway amino-acid biosynthesis; L-proline biosynthesis; L-glutamate 5-semialdehyde from L-glutamate: step 2/2. In terms of biological role, catalyzes the NADPH-dependent reduction of L-glutamate 5-phosphate into L-glutamate 5-semialdehyde and phosphate. The product spontaneously undergoes cyclization to form 1-pyrroline-5-carboxylate. This is Gamma-glutamyl phosphate reductase from Desulfosudis oleivorans (strain DSM 6200 / JCM 39069 / Hxd3) (Desulfococcus oleovorans).